The primary structure comprises 247 residues: tRNA pseudouridine synthase A (247 aa).

D53 acts as the Nucleophile in catalysis. Position 111 (Y111) interacts with substrate.

It belongs to the tRNA pseudouridine synthase TruA family. As to quaternary structure, homodimer.

The catalysed reaction is uridine(38/39/40) in tRNA = pseudouridine(38/39/40) in tRNA. Functionally, formation of pseudouridine at positions 38, 39 and 40 in the anticodon stem and loop of transfer RNAs. The sequence is that of tRNA pseudouridine synthase A from Bacillus licheniformis (strain ATCC 14580 / DSM 13 / JCM 2505 / CCUG 7422 / NBRC 12200 / NCIMB 9375 / NCTC 10341 / NRRL NRS-1264 / Gibson 46).